The following is a 178-amino-acid chain: Major non-capsid protein (178 aa).

It belongs to the tenuiviruses NCP family.

The protein resides in the host cytoplasm. In terms of biological role, induces the formation of large intracellular inclusion body, organized in amorphous and crystalline arrays. Presumably the main cause of the stripe disease observed in host. The polypeptide is Major non-capsid protein (Rice stripe virus (isolate T) (RSV)).